Consider the following 386-residue polypeptide: Ribonucleoside-diphosphate reductase subunit M2 (386 aa).

Positions 1–24 (MSSTRSPLKTKNENTISTKMNNMS) are enriched in polar residues. Residues 1–36 (MSSTRSPLKTKNENTISTKMNNMSFVDKENTPPSLS) are disordered. Phosphoserine is present on Ser6. Phosphothreonine is present on Thr31. Fe cation contacts are provided by Asp135, Glu166, and His169. Tyr173 is a catalytic residue. Fe cation contacts are provided by Glu229, Glu263, and His266.

This sequence belongs to the ribonucleoside diphosphate reductase small chain family. As to quaternary structure, heterodimer of a large and a small subunit. It depends on Fe cation as a cofactor.

The protein resides in the cytoplasm. The catalysed reaction is a 2'-deoxyribonucleoside 5'-diphosphate + [thioredoxin]-disulfide + H2O = a ribonucleoside 5'-diphosphate + [thioredoxin]-dithiol. Functionally, provides the precursors necessary for DNA synthesis. Catalyzes the biosynthesis of deoxyribonucleotides from the corresponding ribonucleotides. The protein is Ribonucleoside-diphosphate reductase subunit M2 (rrm2) of Danio rerio (Zebrafish).